The sequence spans 844 residues: Prickle-like protein 2 (844 aa).

One can recognise a PET domain in the interval 18 to 126; sequence FDFQRNSTSD…NVRPFPVTMT (109 aa). S92 bears the Phosphoserine mark. LIM zinc-binding domains follow at residues 128 to 193, 193 to 253, and 253 to 317; these read AICE…CLKP, PRCA…LYAE, and EYCD…EDPN. 2 disordered regions span residues 314–350 and 481–519; these read EDPN…TEEP and ESYS…QQCR. The span at 318–327 shows a compositional bias: polar residues; sequence GSDSSDSAFQ. A phosphoserine mark is found at S319, S321, and S322. Over residues 481–493 the composition is skewed to low complexity; the sequence is ESYSDMSSQSFSE. Residues T534, T536, and T539 each carry the phosphothreonine modification. 4 positions are modified to phosphoserine: S543, S546, S607, and S642. Residues 639–709 form a disordered region; the sequence is MHQSFDFDGG…HLASEREAIS (71 aa). The span at 682 to 692 shows a compositional bias: basic residues; that stretch reads FRPHRSRRSRR. Basic and acidic residues predominate over residues 693–709; sequence SRSDNALHLASEREAIS. S731 is modified (phosphoserine). A disordered region spans residues 822-844; that stretch reads STLGGRGQLHSRKRQKSKNCIIS. Residue C841 is modified to Cysteine methyl ester. Residue C841 is the site of S-farnesyl cysteine attachment. A propeptide spans 842–844 (removed in mature form); that stretch reads IIS.

It belongs to the prickle / espinas / testin family. As to expression, expressed in brain, eye and testis. Additionally in fetal brain, adult cartilage, pancreatic islet, gastric cancer and uterus tumors.

The protein resides in the nucleus membrane. In Homo sapiens (Human), this protein is Prickle-like protein 2 (PRICKLE2).